The sequence spans 95 residues: MDTCNVSLQILPSVEDSRLYEVVDKVIEYIESTGVKFEVGPMETTMEGKIDDLLEIVKKSQEICIEEGAGRVISIVKIDYKKGGVTMDEKVGKYR.

Belongs to the UPF0045 family.

The chain is UPF0045 protein CPE1503 from Clostridium perfringens (strain 13 / Type A).